Reading from the N-terminus, the 348-residue chain is Phenylalanine--tRNA ligase alpha subunit (348 aa).

Glutamate 259 provides a ligand contact to Mg(2+).

Belongs to the class-II aminoacyl-tRNA synthetase family. Phe-tRNA synthetase alpha subunit type 1 subfamily. As to quaternary structure, tetramer of two alpha and two beta subunits. The cofactor is Mg(2+).

It is found in the cytoplasm. It catalyses the reaction tRNA(Phe) + L-phenylalanine + ATP = L-phenylalanyl-tRNA(Phe) + AMP + diphosphate + H(+). The sequence is that of Phenylalanine--tRNA ligase alpha subunit from Limosilactobacillus reuteri (strain DSM 20016) (Lactobacillus reuteri).